Reading from the N-terminus, the 50-residue chain is Large ribosomal subunit protein eL39 (50 aa).

It belongs to the eukaryotic ribosomal protein eL39 family.

In Methanoculleus marisnigri (strain ATCC 35101 / DSM 1498 / JR1), this protein is Large ribosomal subunit protein eL39.